Reading from the N-terminus, the 270-residue chain is MTSLKQQPPHLLRGIPLAVRKLKKAFGAREVLKDIDLHIPAGQFVAIVGRSGCGKSTLLRLLAGLDKPTQGQLLAGSAPLDDAREDTRLMFQEARLLPWKKIIDNVGLGLSGDWRAQALEALEAVGLAERANEWPAALSGGQKQRVALARALIHKPRLLLLDEPLGALDALTRIEMQQLIEKLWGQYGFTVLLVTHDVSEAVAIADRVILIEEGQIGLDLLVDLPRPRVRGSHRLAALEAEVLNRVLALPGSPPDPEPFSPLPTQLRWAN.

The ABC transporter domain maps to 17 to 238 (LAVRKLKKAF…VRGSHRLAAL (222 aa)). Residue 49-56 (GRSGCGKS) participates in ATP binding.

The protein belongs to the ABC transporter superfamily. Aliphatic sulfonates importer (TC 3.A.1.17.2) family. As to quaternary structure, the complex is composed of two ATP-binding proteins (SsuB), two transmembrane proteins (SsuC) and a solute-binding protein (SsuA).

It is found in the cell inner membrane. The enzyme catalyses ATP + H2O + aliphatic sulfonate-[sulfonate-binding protein]Side 1 = ADP + phosphate + aliphatic sulfonateSide 2 + [sulfonate-binding protein]Side 1.. Its function is as follows. Part of the ABC transporter complex SsuABC involved in aliphatic sulfonates import. Responsible for energy coupling to the transport system. This is Aliphatic sulfonates import ATP-binding protein SsuB 3 from Pseudomonas syringae pv. syringae (strain B728a).